Reading from the N-terminus, the 122-residue chain is Ribonuclease P protein component (122 aa).

Belongs to the RnpA family. As to quaternary structure, consists of a catalytic RNA component (M1 or rnpB) and a protein subunit.

The catalysed reaction is Endonucleolytic cleavage of RNA, removing 5'-extranucleotides from tRNA precursor.. Functionally, RNaseP catalyzes the removal of the 5'-leader sequence from pre-tRNA to produce the mature 5'-terminus. It can also cleave other RNA substrates such as 4.5S RNA. The protein component plays an auxiliary but essential role in vivo by binding to the 5'-leader sequence and broadening the substrate specificity of the ribozyme. The protein is Ribonuclease P protein component of Lactobacillus helveticus (strain DPC 4571).